A 304-amino-acid chain; its full sequence is tRNA-uridine aminocarboxypropyltransferase 1 (304 aa).

A disordered region spans residues 1 to 30; that stretch reads MALSPSVVPQESEENNANCVETKQSQTAST. Residues 15–30 show a composition bias toward polar residues; that stretch reads NNANCVETKQSQTAST. Residues 206-209 carry the DXTW motif; the sequence is DSTW.

The protein belongs to the TDD superfamily. DTWD1 family.

It is found in the nucleus. It carries out the reaction a uridine in tRNA + S-adenosyl-L-methionine = a 3-[(3S)-3-amino-3-carboxypropyl]uridine in tRNA + S-methyl-5'-thioadenosine + H(+). Its function is as follows. Catalyzes the formation of 3-(3-amino-3-carboxypropyl)uridine (acp3U) at position 20 in the D-loop of several cytoplasmic tRNAs (acp3U(20)). The chain is tRNA-uridine aminocarboxypropyltransferase 1 from Rattus norvegicus (Rat).